The following is a 190-amino-acid chain: Putative manganese efflux pump MntP (190 aa).

A run of 6 helical transmembrane segments spans residues 3-23 (PASI…AAVG), 39-59 (IGLI…FIGQ), 65-85 (VANW…LHMI), 106-128 (WLLA…GLAF), 133-155 (IWVA…VMLG), and 157-177 (AIGT…LIIV).

The protein belongs to the MntP (TC 9.B.29) family.

The protein resides in the cell inner membrane. In terms of biological role, probably functions as a manganese efflux pump. The protein is Putative manganese efflux pump MntP of Pseudomonas fluorescens (strain ATCC BAA-477 / NRRL B-23932 / Pf-5).